The primary structure comprises 206 residues: MAQPLILGVSGASGLIYAVRAIKHLLAADYTIELVASRASYQVWQAEQNIQMPGEPSAQAEFWRSQAGVEKGGKLICHRWGDVGATIASGSYRCAGMVVLPCSMSTVAKLAVGMSSDLLERAADVQIKEGKPLVVVPRETPLSLIHLRNLTSLAEAGVRIVPAIPAWYHQPQSVEDLVDFVVARALDQLAIDCVPLQRWQGGMEGE.

FMN contacts are provided by residues 11–13 (GAS), Ser37, 103–106 (SMST), and Arg138. The dimethylallyl phosphate site is built by Tyr168 and Arg184.

It belongs to the UbiX/PAD1 family.

It carries out the reaction dimethylallyl phosphate + FMNH2 = prenylated FMNH2 + phosphate. In terms of biological role, flavin prenyltransferase that catalyzes the synthesis of the prenylated FMN cofactor (prenyl-FMN) for 4-hydroxy-3-polyprenylbenzoic acid decarboxylase UbiD. The prenyltransferase is metal-independent and links a dimethylallyl moiety from dimethylallyl monophosphate (DMAP) to the flavin N5 and C6 atoms of FMN. The polypeptide is Flavin prenyltransferase UbiX (Synechocystis sp. (strain ATCC 27184 / PCC 6803 / Kazusa)).